The chain runs to 343 residues: N-acetyl-gamma-glutamyl-phosphate reductase (343 aa).

Residue C147 is part of the active site.

Belongs to the NAGSA dehydrogenase family. Type 1 subfamily.

The protein localises to the cytoplasm. The catalysed reaction is N-acetyl-L-glutamate 5-semialdehyde + phosphate + NADP(+) = N-acetyl-L-glutamyl 5-phosphate + NADPH + H(+). Its pathway is amino-acid biosynthesis; L-arginine biosynthesis; N(2)-acetyl-L-ornithine from L-glutamate: step 3/4. Functionally, catalyzes the NADPH-dependent reduction of N-acetyl-5-glutamyl phosphate to yield N-acetyl-L-glutamate 5-semialdehyde. This is N-acetyl-gamma-glutamyl-phosphate reductase from Staphylococcus aureus (strain MRSA252).